The following is a 444-amino-acid chain: E1B 55 kDa protein (444 aa).

Residues 1–27 (MEQDSDLESGRATNQRPPRVRVRGAGV) form a disordered region. Phosphoserine occurs at positions 438 and 439.

This sequence belongs to the adenoviridae E1B 55 kDa protein family. In terms of assembly, interacts with host PML-4 and PML-5; this interaction promotes efficient subnuclear targeting of E1B-55K to PML nuclear bodies. Interacts with E4-ORF3 protein. Interacts with E4-ORF6 protein.

The protein resides in the host nucleus. The protein localises to the host cytoplasm. Plays a major role to prevent cellular inhibition of viral genome replication. Assembles an SCF-like E3 ubiquitin ligase complex based on the cellular proteins ELOB, ELOC, CUL5 and RBX1, in cooperation with viral E4orf6. This viral RING-type ligase ubiquitinates cellular substrates and targets them to proteasomal degradation: TP53/p53, LIG4, MRE11-RAD50-NBS1 (MRN) complex, ITGA3, DAXX and BLM. E1B-55K probably acts as the substrate-specific adapter of the SCF-like E3 ubiquitin ligase complex. Degradation of host TP53/p53 activity is essential for preventing E1A-induced TP53 accumulation that would otherwise lead to cell apoptosis and growth arrest. E1B-55K also inactivates TP53 transcription-factor activity by binding its transactivation domain. E1B-55K also functions as a SUMO1 E3 ligase for TP53 which causes the latter to be sequestered in promyelocytic leukemia (PML) nuclear bodies thereby contributing to maximal inhibition of TP53 function. In Canis lupus familiaris (Dog), this protein is E1B 55 kDa protein.